Reading from the N-terminus, the 376-residue chain is Glutamate 5-kinase (376 aa).

An ATP-binding site is contributed by K17. 3 residues coordinate substrate: S57, D144, and N156. Position 176–177 (176–177 (TD)) interacts with ATP. Residues 283–361 (KGQLVLDEGA…SEINQLLGYS (79 aa)) form the PUA domain.

It belongs to the glutamate 5-kinase family.

The protein resides in the cytoplasm. It carries out the reaction L-glutamate + ATP = L-glutamyl 5-phosphate + ADP. It participates in amino-acid biosynthesis; L-proline biosynthesis; L-glutamate 5-semialdehyde from L-glutamate: step 1/2. In terms of biological role, catalyzes the transfer of a phosphate group to glutamate to form L-glutamate 5-phosphate. This Hydrogenovibrio crunogenus (strain DSM 25203 / XCL-2) (Thiomicrospira crunogena) protein is Glutamate 5-kinase.